The primary structure comprises 362 residues: Aminomethyltransferase (362 aa).

Belongs to the GcvT family. In terms of assembly, the glycine cleavage system is composed of four proteins: P, T, L and H.

It carries out the reaction N(6)-[(R)-S(8)-aminomethyldihydrolipoyl]-L-lysyl-[protein] + (6S)-5,6,7,8-tetrahydrofolate = N(6)-[(R)-dihydrolipoyl]-L-lysyl-[protein] + (6R)-5,10-methylene-5,6,7,8-tetrahydrofolate + NH4(+). In terms of biological role, the glycine cleavage system catalyzes the degradation of glycine. This Listeria monocytogenes serotype 4b (strain CLIP80459) protein is Aminomethyltransferase.